Here is a 458-residue protein sequence, read N- to C-terminus: Histone acetyltransferase Tip60 homolog (458 aa).

Positions 1–24 are disordered; the sequence is MTEPKKEIIEDENHGISKKIPTDP. The Tudor-knot domain occupies 30–86; sequence VTEGCRLLVMMASQEEERWAEVISRCRAANGSIKFYVHYIDCNRRLDEWVQSDRLNL. The disordered stretch occupies residues 94-123; it reads KGGKKGAHLREENRDSNENEGKKSGRKRKI. Over residues 101–116 the composition is skewed to basic and acidic residues; the sequence is HLREENRDSNENEGKK. The 279-residue stretch at 168–446 folds into the MYST-type HAT domain; that stretch reads TRIRNVECIE…INPAALQWRP (279 aa). A C2HC MYST-type zinc finger spans residues 201 to 226; it reads IYICEFCLKYLKSKTCLKRHMEKCAM. Residue Lys268 is modified to N6-acetyllysine; by autocatalysis. Acetyl-CoA-binding positions include 311–313 and 318–324; these read ILV and QKKGYGS. The active-site Proton donor/acceptor is the Glu344. Acetyl-CoA contacts are provided by Ser348 and Ser357.

Belongs to the MYST (SAS/MOZ) family. As to quaternary structure, interacts with transcription-associated protein trr-1. Probably a component of a complex with histone acetyltransferase (HAT) activity, at least composed of mys-1 and trr-1. Post-translationally, autoacetylation at Lys-268 is required for binding histones with high affinity and for proper function.

Its subcellular location is the nucleus. The enzyme catalyses L-lysyl-[protein] + acetyl-CoA = N(6)-acetyl-L-lysyl-[protein] + CoA + H(+). Probable catalytic subunit of the Tip60 chromatin-remodeling complex. Plays a role in acetylation of nucleosomal histone H4 and perhaps also H2A, probably acting as a component of the Tip60 histone acetyltransferase complex. Acts in the determination of vulval and distal tip cell (DTC) precursor cell fates. Involved in the positive regulation of transcription factor daf-16, probably acting by histone acetylation; thereby modulating stress resistance. This chain is Histone acetyltransferase Tip60 homolog, found in Caenorhabditis elegans.